Here is a 147-residue protein sequence, read N- to C-terminus: MALRACGLIIFRRHLIPKVDNTTIEFLLLQASDGIHHWTPPKGHVDPGENDLETALRETQEETGIEASQLIVLEGFRRELNYVARKKPKTVIYWLAEVKDYDVEIRLSQEHQAYRWLGLDEACQLAQFEEMKATLQEGHQFLCSTPA.

Ala2 carries the N-acetylalanine modification. Positions Ala2–His139 constitute a Nudix hydrolase domain. Residues Gly43–Gly64 carry the Nudix box motif.

Belongs to the Nudix hydrolase family. A divalent metal cation is required as a cofactor.

It catalyses the reaction P(1),P(4)-bis(5'-guanosyl) tetraphosphate + H2O = GMP + GTP + 2 H(+). The enzyme catalyses a 5'-end CoA-ribonucleoside in mRNA + H2O = a 5'-end phospho-adenosine-phospho-ribonucleoside in mRNA + (R)-4'-phosphopantetheine + 2 H(+). The catalysed reaction is a 5'-end FAD-phospho-ribonucleoside in mRNA + H2O = a 5'-end phospho-adenosine-phospho-ribonucleoside in mRNA + FMN + 2 H(+). In terms of biological role, catalyzes the asymmetric hydrolysis of diadenosine 5',5'''-P1,P4-tetraphosphate (Ap4A) to yield AMP and ATP. Exhibits decapping activity towards FAD-capped RNAs and dpCoA-capped RNAs in vitro. The chain is Bis(5'-nucleosyl)-tetraphosphatase [asymmetrical] (Nudt2) from Rattus norvegicus (Rat).